The chain runs to 974 residues: UvrABC system protein A (974 aa).

Position 34–41 (34–41) interacts with ATP; sequence GLSGSGKS. ABC transporter domains follow at residues 331 to 610 and 630 to 959; these read WARS…TNSL and ISKT…QFLK. Position 663–670 (663–670) interacts with ATP; sequence GVSGGGKS. A C4-type zinc finger spans residues 762-788; it reads CEACQGDGVIKIEMHFLPDVYVTCDVC.

The protein belongs to the ABC transporter superfamily. UvrA family. In terms of assembly, forms a heterotetramer with UvrB during the search for lesions.

The protein localises to the cytoplasm. Functionally, the UvrABC repair system catalyzes the recognition and processing of DNA lesions. UvrA is an ATPase and a DNA-binding protein. A damage recognition complex composed of 2 UvrA and 2 UvrB subunits scans DNA for abnormalities. When the presence of a lesion has been verified by UvrB, the UvrA molecules dissociate. The sequence is that of UvrABC system protein A from Brucella melitensis biotype 1 (strain ATCC 23456 / CCUG 17765 / NCTC 10094 / 16M).